The sequence spans 631 residues: FAST kinase domain-containing protein 4 (631 aa).

A mitochondrion-targeting transit peptide spans 1–107; that stretch reads MAAHLVKRCT…NQAAMVLIRL (107 aa). Ser553 is subject to Phosphoserine. In terms of domain architecture, RAP spans 561–619; it reads LAFLRWEFPNFNSRSKDLLGRFVLARRHIVAAGFLIVDVPFYEWLELKSEWQKGAYLKD.

This sequence belongs to the FAST kinase family. As to expression, ubiquitously expressed. Expression detected in spleen, thymus, testis, ovary, colon, heart, smooth muscle, kidney, brain, lung, liver and white adipose tissue with highest expression in smooth muscle.

Its subcellular location is the mitochondrion matrix. Functionally, plays a role in processing of mitochondrial RNA precursors and in stabilization of a subset of mature mitochondrial RNA species, such as MT-CO1, MT-CO2, MT-CYB, MT-CO3, MT-ND3, MT-ND5 and MT-ATP8/6. May play a role in cell cycle progression. The chain is FAST kinase domain-containing protein 4 from Homo sapiens (Human).